We begin with the raw amino-acid sequence, 103 residues long: MHVKKGDTVKVISGKDKGKQGVILEAYPKKDRVLVEGVNIVKKHAKPSQENPQGGILNMEAPIHVSNVLPIDPKTGEPTRVGYKVENGKKVRIAKKSGEVLDK.

It belongs to the universal ribosomal protein uL24 family. In terms of assembly, part of the 50S ribosomal subunit.

Its function is as follows. One of two assembly initiator proteins, it binds directly to the 5'-end of the 23S rRNA, where it nucleates assembly of the 50S subunit. One of the proteins that surrounds the polypeptide exit tunnel on the outside of the subunit. The sequence is that of Large ribosomal subunit protein uL24 from Halalkalibacterium halodurans (strain ATCC BAA-125 / DSM 18197 / FERM 7344 / JCM 9153 / C-125) (Bacillus halodurans).